A 611-amino-acid chain; its full sequence is Developmental and secondary metabolism regulator veA (611 aa).

3 disordered regions span residues 1–57, 222–497, and 511–611; these read MNRK…RPVD, RRRE…ASFD, and LEAS…PGHA. Polar residues predominate over residues 14 to 23; that stretch reads KSSATRTTND. The Velvet domain occupies 24–216; it reads GRAITYEMQV…AEQGCRVRIR (193 aa). The Nuclear localization signal motif lies at 38-43; the sequence is QRARAC. Over residues 242–254 the composition is skewed to low complexity; sequence AARARASATPDPS. The span at 274 to 290 shows a compositional bias: polar residues; that stretch reads SASNASHQSLGSISRRP. Residues 330 to 340 show a composition bias toward low complexity; the sequence is YPPNQFVQQQP. Positions 341–361 are enriched in pro residues; the sequence is PMQPPLPQYQPPNYPAPPPPV. The span at 362 to 377 shows a compositional bias: low complexity; the sequence is TAAQQPQPAQSYYNYP. Residues 419–434 show a composition bias toward polar residues; that stretch reads RNSQQIPPTSQPTAYT. 2 stretches are compositionally biased toward low complexity: residues 435 to 452 and 461 to 471; these read QPMQ…QHYQ and QASQHSSYSSM. The tract at residues 455-499 is PEST; that stretch reads PPPPPSQASQHSSYSSMDLYNSRPAPIEPHHHGNTPASKASFDLP. Polar residues predominate over residues 511–533; it reads LEASSPTSVAPTNAYFSGGQTPI.

Belongs to the velvet family. VeA subfamily. In terms of assembly, component of the heterotrimeric velvet complex composed of laeA, veA and velB; VeA acting as a bridging protein between laeA and velB.

The protein localises to the nucleus. The protein resides in the cytoplasm. Functionally, component of the velvet transcription factor complex that controls sexual/asexual developmental ratio in response to light, promoting sexual development in the darkness while stimulating asexual sporulation under illumination. The velvet complex hat acts as a global regulator for secondary metabolite gene expression. Controls the expression of the dothistromin gene cluster. Regulates hyphal growth and pigment formation. Acts as a positive regulator of virulence. The chain is Developmental and secondary metabolism regulator veA from Dothistroma septosporum (strain NZE10 / CBS 128990) (Red band needle blight fungus).